A 435-amino-acid polypeptide reads, in one-letter code: Methylenetetrahydrofolate--tRNA-(uracil-5-)-methyltransferase TrmFO (435 aa).

Position 10–15 (10–15) interacts with FAD; it reads GAGLAG.

It belongs to the MnmG family. TrmFO subfamily. In terms of assembly, homodimer. The cofactor is FAD.

It is found in the cytoplasm. It catalyses the reaction uridine(54) in tRNA + (6R)-5,10-methylene-5,6,7,8-tetrahydrofolate + NADH + H(+) = 5-methyluridine(54) in tRNA + (6S)-5,6,7,8-tetrahydrofolate + NAD(+). The catalysed reaction is uridine(54) in tRNA + (6R)-5,10-methylene-5,6,7,8-tetrahydrofolate + NADPH + H(+) = 5-methyluridine(54) in tRNA + (6S)-5,6,7,8-tetrahydrofolate + NADP(+). Its function is as follows. Catalyzes the folate-dependent formation of 5-methyl-uridine at position 54 (M-5-U54) in all tRNAs. The polypeptide is Methylenetetrahydrofolate--tRNA-(uracil-5-)-methyltransferase TrmFO (Bacillus subtilis (strain 168)).